Reading from the N-terminus, the 152-residue chain is Large ribosomal subunit protein uL15 (152 aa).

The interval 1-56 (MELNTLKPAKNSVKQNTRYGRGQGSGKGGTSTRGHKGAKSRSGYKSKPGFEGGQLP) is disordered. Residues 21–31 (RGQGSGKGGTS) show a composition bias toward gly residues. Residues 33–44 (RGHKGAKSRSGY) are compositionally biased toward basic residues.

The protein belongs to the universal ribosomal protein uL15 family. In terms of assembly, part of the 50S ribosomal subunit.

Functionally, binds to the 23S rRNA. In Amoebophilus asiaticus (strain 5a2), this protein is Large ribosomal subunit protein uL15.